The chain runs to 260 residues: Exosome complex component Rrp4 (260 aa).

The region spanning 59-128 is the S1 motif domain; sequence NDVVIGIVIV…NSMKVELALR (70 aa). A KH domain is found at 136–194; sequence KTGQIVEVEPVKVPRVIGHGGSMISMLKKETNCSIFVGQNGRIWIDGKDDDVELLSKAL.

This sequence belongs to the RRP4 family. Component of the archaeal exosome complex. Forms a trimer of Rrp4 and/or Csl4 subunits. The trimer associates with a hexameric ring-like arrangement composed of 3 Rrp41-Rrp42 heterodimers.

It localises to the cytoplasm. Functionally, non-catalytic component of the exosome, which is a complex involved in RNA degradation. Increases the RNA binding and the efficiency of RNA degradation. Confers strong poly(A) specificity to the exosome. This Methanosarcina barkeri (strain Fusaro / DSM 804) protein is Exosome complex component Rrp4.